A 492-amino-acid chain; its full sequence is Catalase (492 aa).

Catalysis depends on residues histidine 65 and asparagine 138. Tyrosine 348 contributes to the heme binding site.

It belongs to the catalase family. As to quaternary structure, homotetramer. Heme is required as a cofactor.

The protein resides in the cytoplasm. It localises to the cytosol. Its subcellular location is the peroxisome matrix. The enzyme catalyses 2 H2O2 = O2 + 2 H2O. Its function is as follows. Catalyzes the degradation of hydrogen peroxide (H(2)O(2)) generated by peroxisomal oxidases to water and oxygen, thereby protecting cells from the toxic effects of hydrogen peroxide. In Ipomoea batatas (Sweet potato), this protein is Catalase.